Reading from the N-terminus, the 1382-residue chain is DNA-directed RNA polymerase subunit beta (1382 aa).

It belongs to the RNA polymerase beta chain family. The RNAP catalytic core consists of 2 alpha, 1 beta, 1 beta' and 1 omega subunit. When a sigma factor is associated with the core the holoenzyme is formed, which can initiate transcription.

The catalysed reaction is RNA(n) + a ribonucleoside 5'-triphosphate = RNA(n+1) + diphosphate. Its function is as follows. DNA-dependent RNA polymerase catalyzes the transcription of DNA into RNA using the four ribonucleoside triphosphates as substrates. This chain is DNA-directed RNA polymerase subunit beta, found in Anaplasma marginale (strain Florida).